Reading from the N-terminus, the 214-residue chain is Adenylate kinase (214 aa).

Position 10–15 (10–15 (GAGKGT)) interacts with ATP. Residues 30–59 (STGDMLRAAVKAGTPLGLEAKKVMDAGQLV) are NMP. Residues Thr-31, Arg-36, 57–59 (QLV), 85–88 (GFPR), and Gln-92 each bind AMP. An LID region spans residues 122 to 159 (GRRVHPGSGRVYHIVFNQPKVEGKDDVTGEDLAIRPDD). ATP-binding positions include Arg-123 and 132 to 133 (VY). Positions 156 and 167 each coordinate AMP. Residue Gln-200 coordinates ATP.

The protein belongs to the adenylate kinase family. In terms of assembly, monomer.

It localises to the cytoplasm. It carries out the reaction AMP + ATP = 2 ADP. It functions in the pathway purine metabolism; AMP biosynthesis via salvage pathway; AMP from ADP: step 1/1. In terms of biological role, catalyzes the reversible transfer of the terminal phosphate group between ATP and AMP. Plays an important role in cellular energy homeostasis and in adenine nucleotide metabolism. The polypeptide is Adenylate kinase (Shewanella piezotolerans (strain WP3 / JCM 13877)).